Here is a 398-residue protein sequence, read N- to C-terminus: Arginine biosynthesis bifunctional protein ArgJ (398 aa).

T148, K174, T185, E271, N393, and T398 together coordinate substrate. Residue T185 is the Nucleophile of the active site.

It belongs to the ArgJ family. Heterotetramer of two alpha and two beta chains.

It is found in the cytoplasm. It catalyses the reaction N(2)-acetyl-L-ornithine + L-glutamate = N-acetyl-L-glutamate + L-ornithine. The enzyme catalyses L-glutamate + acetyl-CoA = N-acetyl-L-glutamate + CoA + H(+). It functions in the pathway amino-acid biosynthesis; L-arginine biosynthesis; L-ornithine and N-acetyl-L-glutamate from L-glutamate and N(2)-acetyl-L-ornithine (cyclic): step 1/1. The protein operates within amino-acid biosynthesis; L-arginine biosynthesis; N(2)-acetyl-L-ornithine from L-glutamate: step 1/4. Functionally, catalyzes two activities which are involved in the cyclic version of arginine biosynthesis: the synthesis of N-acetylglutamate from glutamate and acetyl-CoA as the acetyl donor, and of ornithine by transacetylation between N(2)-acetylornithine and glutamate. The protein is Arginine biosynthesis bifunctional protein ArgJ of Listeria monocytogenes serovar 1/2a (strain ATCC BAA-679 / EGD-e).